Reading from the N-terminus, the 307-residue chain is Elongation factor Ts (307 aa).

The segment at 79-82 (TDFV) is involved in Mg(2+) ion dislocation from EF-Tu.

It belongs to the EF-Ts family.

It is found in the cytoplasm. Its function is as follows. Associates with the EF-Tu.GDP complex and induces the exchange of GDP to GTP. It remains bound to the aminoacyl-tRNA.EF-Tu.GTP complex up to the GTP hydrolysis stage on the ribosome. This chain is Elongation factor Ts (tsf), found in Bartonella quintana (strain Toulouse) (Rochalimaea quintana).